Here is a 438-residue protein sequence, read N- to C-terminus: MESQQLHQNPHSLHGSAYASVTSKEVPSNQDPLAVSASNLPEFDRDSTKVNSQQETTPGTSAVPENHHHVSPQPASVPPPQNGQYQQHGMMTPNKAMASNWAHYQQPSMMTCSHYQTSPAYYQPDPHYPLPQYIPPLSTSSPDPIDLKNQHSEIPQAKTKVGNNVLPPHTLTSEENFSTWVKFYIRFLKNSNLGDIIPNDQGEIKRQMTYEEHAYIYNTFQAFAPFHLLPTWVKQILEINYADILTVLCKSVSKMQTNNQELKDWIALANLEYDGSTSADTFEITVSTIIQRLKENNINVSDRLACQLILKGLSGDFKYLRNQYRTKTNMKLSQLFAEIQLIYDENKIMNLNKPSQYKQHSEYKNVSRTSPNTTNTKVTTRNYHRTNSSKPRAAKAHNIATSSKFSRVNNDHINESTVSSQYLSDDNELSLRPATERI.

3 stretches are compositionally biased toward polar residues: residues 1–11, 19–39, and 49–60; these read MESQQLHQNPH, ASVT…SASN, and KVNSQQETTPGT. Disordered stretches follow at residues 1-86, 364-397, and 419-438; these read MESQ…GQYQ, KNVS…AKAH, and SSQY…TERI. The segment at 295-397 is RNA-binding; it reads ENNINVSDRL…SSKPRAAKAH (103 aa). Low complexity predominate over residues 369 to 381; that stretch reads TSPNTTNTKVTTR.

As to quaternary structure, homotrimer.

The protein resides in the cytoplasm. Functionally, capsid protein (CA) is the structural component of the virus-like particle (VLP), forming the shell that encapsulates the retrotransposons dimeric RNA genome. The particles are assembled from trimer-clustered units and there are holes in the capsid shells that allow for the diffusion of macromolecules. CA also has nucleocapsid-like chaperone activity, promoting primer tRNA(i)-Met annealing to the multipartite primer-binding site (PBS), dimerization of Ty2 RNA and initiation of reverse transcription. The polypeptide is Transposon Ty2-LR1 Gag polyprotein (TY2A-LR1) (Saccharomyces cerevisiae (strain ATCC 204508 / S288c) (Baker's yeast)).